A 256-amino-acid chain; its full sequence is Homeobox protein TGIF2LX (256 aa).

The interval 1–45 is disordered; it reads MEAAADSPAETRSRVEKDSRRVEKDSRRPKKDSPAKTQSPAQDTS. The segment covering 9 to 34 has biased composition (basic and acidic residues); it reads AETRSRVEKDSRRVEKDSRRPKKDSP. Positions 35–45 are enriched in polar residues; that stretch reads AKTQSPAQDTS. A DNA-binding region (homeobox; TALE-type) is located at residues 62-125; sequence EHKKKRKGYL…INARRRILPD (64 aa). The disordered stretch occupies residues 136-224; that stretch reads VGHKTGKDAN…SSSPEPVSTE (89 aa). A compositionally biased stretch (polar residues) spans 166-179; the sequence is DNVQSLPLRSSPKG. Positions 209–224 are enriched in low complexity; the sequence is VSNITSSSSPEPVSTE.

It belongs to the TALE/TGIF homeobox family.

It localises to the nucleus. Its function is as follows. May have a transcription role in testis. This Papio hamadryas (Hamadryas baboon) protein is Homeobox protein TGIF2LX (TGIF2LX).